Reading from the N-terminus, the 268-residue chain is MERYENLFAQLNDRREGAFVPFVTLGDPGIEQSLKIIDTLIDAGADALELGVPFSDPLADGPTIQNANLRAFAAGVTPAQCFEMLALIREKHPTIPIGLLMYANLVFNNGIDAFYARCEQVGVDSVLVADVPVEESAPFRQAALRHNIAPIFICPPNADDDLLRQVASYGRGYTYLLSRSGVTGAENRGALPLHHLIEKLKEYHAAPALQGFGISSPEQVSAAVRAGAAGAISGSAIVKIIEKNLASPKQMLAELRSFVSAMKAASRA.

Active-site proton acceptor residues include Glu49 and Asp60.

It belongs to the TrpA family. As to quaternary structure, tetramer of two alpha and two beta chains.

The catalysed reaction is (1S,2R)-1-C-(indol-3-yl)glycerol 3-phosphate + L-serine = D-glyceraldehyde 3-phosphate + L-tryptophan + H2O. Its pathway is amino-acid biosynthesis; L-tryptophan biosynthesis; L-tryptophan from chorismate: step 5/5. Functionally, the alpha subunit is responsible for the aldol cleavage of indoleglycerol phosphate to indole and glyceraldehyde 3-phosphate. The sequence is that of Tryptophan synthase alpha chain from Salmonella typhimurium (strain LT2 / SGSC1412 / ATCC 700720).